We begin with the raw amino-acid sequence, 219 residues long: Octanoyltransferase (219 aa).

The 176-residue stretch at 31–206 folds into the BPL/LPL catalytic domain; the sequence is TASADEIWLV…ECLRLMKASA (176 aa). Substrate is bound by residues 70-77, 137-139, and 150-152; these read RGGQVTFH, SLG, and GLA. C168 acts as the Acyl-thioester intermediate in catalysis.

This sequence belongs to the LipB family.

The protein localises to the cytoplasm. It carries out the reaction octanoyl-[ACP] + L-lysyl-[protein] = N(6)-octanoyl-L-lysyl-[protein] + holo-[ACP] + H(+). Its pathway is protein modification; protein lipoylation via endogenous pathway; protein N(6)-(lipoyl)lysine from octanoyl-[acyl-carrier-protein]: step 1/2. Functionally, catalyzes the transfer of endogenously produced octanoic acid from octanoyl-acyl-carrier-protein onto the lipoyl domains of lipoate-dependent enzymes. Lipoyl-ACP can also act as a substrate although octanoyl-ACP is likely to be the physiological substrate. The polypeptide is Octanoyltransferase (Sodalis glossinidius (strain morsitans)).